The sequence spans 178 residues: Large ribosomal subunit protein uL6 (178 aa).

The protein belongs to the universal ribosomal protein uL6 family. In terms of assembly, part of the 50S ribosomal subunit.

In terms of biological role, this protein binds to the 23S rRNA, and is important in its secondary structure. It is located near the subunit interface in the base of the L7/L12 stalk, and near the tRNA binding site of the peptidyltransferase center. In Streptococcus equi subsp. zooepidemicus (strain H70), this protein is Large ribosomal subunit protein uL6.